The primary structure comprises 369 residues: Flagellar P-ring protein (369 aa).

Residues 1 to 23 (MRSLLRWMGVLLLCGLCAAPAQA) form the signal peptide.

Belongs to the FlgI family. In terms of assembly, the basal body constitutes a major portion of the flagellar organelle and consists of four rings (L,P,S, and M) mounted on a central rod.

The protein resides in the periplasm. It localises to the bacterial flagellum basal body. Functionally, assembles around the rod to form the L-ring and probably protects the motor/basal body from shearing forces during rotation. This Chromohalobacter salexigens (strain ATCC BAA-138 / DSM 3043 / CIP 106854 / NCIMB 13768 / 1H11) protein is Flagellar P-ring protein.